The chain runs to 214 residues: tRNA (guanine-N(7)-)-methyltransferase (214 aa).

S-adenosyl-L-methionine contacts are provided by Glu-44, Glu-69, Asp-96, and Asp-118. Asp-118 is a catalytic residue. Substrate is bound at residue Lys-122. The interval 124-129 (RHEKRR) is interaction with RNA. Substrate-binding positions include Asp-154 and 192–195 (TEYE).

This sequence belongs to the class I-like SAM-binding methyltransferase superfamily. TrmB family.

The catalysed reaction is guanosine(46) in tRNA + S-adenosyl-L-methionine = N(7)-methylguanosine(46) in tRNA + S-adenosyl-L-homocysteine. It participates in tRNA modification; N(7)-methylguanine-tRNA biosynthesis. Catalyzes the formation of N(7)-methylguanine at position 46 (m7G46) in tRNA. This Lacticaseibacillus casei (strain BL23) (Lactobacillus casei) protein is tRNA (guanine-N(7)-)-methyltransferase.